Consider the following 395-residue polypeptide: MATVDRWLLPDGIEEVLPPEAARIEIARRQVLDLFQSWGYELVVTPHIEYLESLLTGAGQDLDQRTFKVVDPQSGRLMGFRADFTPQVARIDAHTLRREGPSRLCYAGSVLHAQPRALSTSRSPIQLGAELYGDASPTSDVEVISLMLATLQLADVPDVHMDLGHVGIYRGLARAAGLSGAVEQQLFDAMQRKAVDEVQALTADLPKDLGSMLRALVELCGGREVLAEARVRLGRAPASVLAALDDLLAIADRLASRYPDLPLYFDLGELRGYHYHTGVVFAVFVPGEGQSIAQGGRYDDIGADFGRARPATGFSTDLKTLVTLGRAEVVLPTGGIWMPDSGDAALWQQVCQLRNEGQRVVQALPGQPLSAALEADCDRQLIQQDGRWQVLPLAQ.

The protein belongs to the class-II aminoacyl-tRNA synthetase family. HisZ subfamily. Heteromultimer composed of HisG and HisZ subunits.

It is found in the cytoplasm. The protein operates within amino-acid biosynthesis; L-histidine biosynthesis; L-histidine from 5-phospho-alpha-D-ribose 1-diphosphate: step 1/9. Its function is as follows. Required for the first step of histidine biosynthesis. May allow the feedback regulation of ATP phosphoribosyltransferase activity by histidine. The protein is ATP phosphoribosyltransferase regulatory subunit of Pseudomonas putida (strain ATCC 700007 / DSM 6899 / JCM 31910 / BCRC 17059 / LMG 24140 / F1).